A 414-amino-acid chain; its full sequence is Glucose-1-phosphate adenylyltransferase (414 aa).

Alpha-D-glucose 1-phosphate is bound by residues Tyr103, Gly168, 183-184, and Ser201; that span reads EK.

The protein belongs to the bacterial/plant glucose-1-phosphate adenylyltransferase family. As to quaternary structure, homotetramer.

It carries out the reaction alpha-D-glucose 1-phosphate + ATP + H(+) = ADP-alpha-D-glucose + diphosphate. It functions in the pathway glycan biosynthesis; glycogen biosynthesis. Its function is as follows. Involved in the biosynthesis of ADP-glucose, a building block required for the elongation reactions to produce glycogen. Catalyzes the reaction between ATP and alpha-D-glucose 1-phosphate (G1P) to produce pyrophosphate and ADP-Glc. The polypeptide is Glucose-1-phosphate adenylyltransferase (Thermus caldophilus).